We begin with the raw amino-acid sequence, 475 residues long: UDP-N-acetylmuramate--L-alanine ligase (475 aa).

Residue 125–131 (GTHGKTT) coordinates ATP.

Belongs to the MurCDEF family.

It is found in the cytoplasm. The catalysed reaction is UDP-N-acetyl-alpha-D-muramate + L-alanine + ATP = UDP-N-acetyl-alpha-D-muramoyl-L-alanine + ADP + phosphate + H(+). The protein operates within cell wall biogenesis; peptidoglycan biosynthesis. Its function is as follows. Cell wall formation. This Actinobacillus pleuropneumoniae serotype 5b (strain L20) protein is UDP-N-acetylmuramate--L-alanine ligase.